The following is a 115-amino-acid chain: NADH-ubiquinone oxidoreductase chain 3 (115 aa).

Transmembrane regions (helical) follow at residues 3–23, 55–75, and 87–107; these read IMIT…IAFW, FFLV…LLPL, and MLTT…YEWL.

The protein belongs to the complex I subunit 3 family. As to quaternary structure, core subunit of respiratory chain NADH dehydrogenase (Complex I) which is composed of 45 different subunits. Interacts with TMEM186. Interacts with TMEM242.

The protein resides in the mitochondrion inner membrane. It catalyses the reaction a ubiquinone + NADH + 5 H(+)(in) = a ubiquinol + NAD(+) + 4 H(+)(out). Core subunit of the mitochondrial membrane respiratory chain NADH dehydrogenase (Complex I) which catalyzes electron transfer from NADH through the respiratory chain, using ubiquinone as an electron acceptor. Essential for the catalytic activity of complex I. The sequence is that of NADH-ubiquinone oxidoreductase chain 3 from Dasypus novemcinctus (Nine-banded armadillo).